The chain runs to 97 residues: MAIGFIGSSPDAELSSENSRISSSVLLGCLLCCTDWSAVVPGKTETFRKPFVAIMIKKLKSCFAAYLSDLEQGSMCDMANASPTSLELGLSKLDKES.

Cystine bridges form between cysteine 32/cysteine 62 and cysteine 33/cysteine 76.

This sequence belongs to the intercrine beta (chemokine CC) family. Highly divergent.

In Homo sapiens (Human), this protein is Putative CC-type chemokine U83 (U83).